We begin with the raw amino-acid sequence, 614 residues long: Probable pectinesterase/pectinesterase inhibitor 13 (614 aa).

A helical membrane pass occupies residues 25–45; that stretch reads IIVGTVSLLVVVAAIVGGAFA. A disordered region spans residues 55 to 102; it reads QQQQQQQAKNHNKSGSGNNVVKDSDKKSPSPPTPSQKAPVSAAQSVKP. N-linked (GlcNAc...) asparagine glycans are attached at residues Asn-66, Asn-128, Asn-197, Asn-243, Asn-301, Asn-351, and Asn-367. Residues 103 to 255 form a pectinesterase inhibitor 13 region; sequence GQGDKIIQTL…QVLTSNSLAL (153 aa). Residues 301 to 598 form a pectinesterase 13 region; that stretch reads NATVAKDGSG…YTVGPFLQGD (298 aa). Substrate-binding residues include Thr-376 and Gln-406. The active-site Proton donor; for pectinesterase activity is Asp-429. Cys-443 and Cys-463 are joined by a disulfide. Asp-450 (nucleophile; for pectinesterase activity) is an active-site residue. Positions 518 and 520 each coordinate substrate. Asn-522 and Asn-588 each carry an N-linked (GlcNAc...) asparagine glycan.

In the N-terminal section; belongs to the PMEI family. The protein in the C-terminal section; belongs to the pectinesterase family. In terms of tissue distribution, expressed in flower buds.

Its subcellular location is the membrane. The catalysed reaction is [(1-&gt;4)-alpha-D-galacturonosyl methyl ester](n) + n H2O = [(1-&gt;4)-alpha-D-galacturonosyl](n) + n methanol + n H(+). The protein operates within glycan metabolism; pectin degradation; 2-dehydro-3-deoxy-D-gluconate from pectin: step 1/5. In terms of biological role, acts in the modification of cell walls via demethylesterification of cell wall pectin. The sequence is that of Probable pectinesterase/pectinesterase inhibitor 13 (PME13) from Arabidopsis thaliana (Mouse-ear cress).